The primary structure comprises 104 residues: Large ribosomal subunit protein bL21 (104 aa).

The protein belongs to the bacterial ribosomal protein bL21 family. As to quaternary structure, part of the 50S ribosomal subunit. Contacts protein L20.

In terms of biological role, this protein binds to 23S rRNA in the presence of protein L20. The polypeptide is Large ribosomal subunit protein bL21 (Francisella philomiragia subsp. philomiragia (strain ATCC 25017 / CCUG 19701 / FSC 153 / O#319-036)).